A 155-amino-acid polypeptide reads, in one-letter code: Small ribosomal subunit protein bS6 (155 aa).

A disordered region spans residues 94 to 155 (VKQEGPLPTP…TPELEEQVKS (62 aa)). Over residues 103–112 (PRSSNKSSNQ) the composition is skewed to polar residues. A compositionally biased stretch (basic and acidic residues) spans 113 to 141 (AEKKENENIDSANKSEPKADETDNKKKIT).

It belongs to the bacterial ribosomal protein bS6 family.

Its function is as follows. Binds together with bS18 to 16S ribosomal RNA. The sequence is that of Small ribosomal subunit protein bS6 from Prochlorococcus marinus (strain MIT 9515).